A 173-amino-acid polypeptide reads, in one-letter code: Transcription factor E (173 aa).

One can recognise an HTH TFE/IIEalpha-type domain in the interval 3–86; that stretch reads DDPLVKSLLT…SWKFEEQEVI (84 aa).

It belongs to the TFE family. Monomer. Interaction with RNA polymerase subunits RpoF and RpoE is necessary for Tfe stimulatory transcription activity. Able to interact with Tbp and RNA polymerase in the absence of DNA promoter. Interacts both with the preinitiation and elongation complexes.

Transcription factor that plays a role in the activation of archaeal genes transcribed by RNA polymerase. Facilitates transcription initiation by enhancing TATA-box recognition by TATA-box-binding protein (Tbp), and transcription factor B (Tfb) and RNA polymerase recruitment. Not absolutely required for transcription in vitro, but particularly important in cases where Tbp or Tfb function is not optimal. It dynamically alters the nucleic acid-binding properties of RNA polymerases by stabilizing the initiation complex and destabilizing elongation complexes. Seems to translocate with the RNA polymerase following initiation and acts by binding to the non template strand of the transcription bubble in elongation complexes. The chain is Transcription factor E from Methanobrevibacter smithii (strain ATCC 35061 / DSM 861 / OCM 144 / PS).